Here is a 210-residue protein sequence, read N- to C-terminus: WASH complex subunit 3 (210 aa).

Residues 49-73 (EEKLASISLRIQQIETTLSILEAKL) are a coiled coil. Residues 173 to 210 (LDPNLLDTPDAPVPDAVKKNTLDQDDDSDDGSESSFSD) form a disordered region. Residues 195–204 (DQDDDSDDGS) show a composition bias toward acidic residues.

This sequence belongs to the CCDC53 family. In terms of assembly, component of the WASH complex.

This is WASH complex subunit 3 from Salmo salar (Atlantic salmon).